The following is a 275-amino-acid chain: MSIRLYKSYTPGTRNRALSVFDELTKTTPEKSLIRKNHRNKGRNNRGIITVRHRGGGHKRRYRLIDFKRNKYGVEGVIASIEYDPNRNARIALVNYTDGEKRYILQPKNLTVGDRILSGSGSPLNIGNTLPLNEIPLGSSIHNIELIPNRGGQIVRAGGTSAKILAKDGDYITLRLPSKEIRLVRKECFATIGEVSNNDAFLVQSGKAGRTRWLGKRPTVRGSVMNPCDHPHGGGEGRAPIGRTRPLTPWGKPALGMKTRKRKKLSDAYILRRRS.

Residues 219–254 (TVRGSVMNPCDHPHGGGEGRAPIGRTRPLTPWGKPA) form a disordered region.

Belongs to the universal ribosomal protein uL2 family. Part of the 50S ribosomal subunit.

The protein resides in the plastid. The protein localises to the chloroplast. In Phaeodactylum tricornutum (strain CCAP 1055/1), this protein is Large ribosomal subunit protein uL2c (rpl2).